Reading from the N-terminus, the 386-residue chain is Alanine racemase 1 (386 aa).

Lys38 functions as the Proton acceptor; specific for D-alanine in the catalytic mechanism. Residue Lys38 is modified to N6-(pyridoxal phosphate)lysine. Arg136 lines the substrate pocket. The active-site Proton acceptor; specific for L-alanine is the Tyr267. Met315 contributes to the substrate binding site.

It belongs to the alanine racemase family. The cofactor is pyridoxal 5'-phosphate.

It carries out the reaction L-alanine = D-alanine. Its pathway is amino-acid biosynthesis; D-alanine biosynthesis; D-alanine from L-alanine: step 1/1. Catalyzes the interconversion of L-alanine and D-alanine. May also act on other amino acids. In Clostridium acetobutylicum (strain ATCC 824 / DSM 792 / JCM 1419 / IAM 19013 / LMG 5710 / NBRC 13948 / NRRL B-527 / VKM B-1787 / 2291 / W), this protein is Alanine racemase 1 (alr1).